The sequence spans 588 residues: Ribonuclease Y (588 aa).

A helical membrane pass occupies residues 7–27; that stretch reads VLLVAVLLLALIVLGAVLVGV. The disordered stretch occupies residues 130–162; it reads ARRSGEREAAVLATTTREQAAEVERRAARMDDR. Positions 148–162 are enriched in basic and acidic residues; that stretch reads QAAEVERRAARMDDR. The 82-residue stretch at 278–359 folds into the KH domain; sequence VVSVLHLPGD…HRIEEVHDLA (82 aa). In terms of domain architecture, HD spans 404 to 497; the sequence is VLKHLVETAH…TQASDACSGG (94 aa).

This sequence belongs to the RNase Y family.

The protein localises to the cell membrane. In terms of biological role, endoribonuclease that initiates mRNA decay. This is Ribonuclease Y from Salinispora arenicola (strain CNS-205).